A 239-amino-acid chain; its full sequence is Phosphoribosylaminoimidazole-succinocarboxamide synthase (239 aa).

Belongs to the SAICAR synthetase family.

The catalysed reaction is 5-amino-1-(5-phospho-D-ribosyl)imidazole-4-carboxylate + L-aspartate + ATP = (2S)-2-[5-amino-1-(5-phospho-beta-D-ribosyl)imidazole-4-carboxamido]succinate + ADP + phosphate + 2 H(+). The protein operates within purine metabolism; IMP biosynthesis via de novo pathway; 5-amino-1-(5-phospho-D-ribosyl)imidazole-4-carboxamide from 5-amino-1-(5-phospho-D-ribosyl)imidazole-4-carboxylate: step 1/2. This is Phosphoribosylaminoimidazole-succinocarboxamide synthase from Bacillus cereus (strain AH187).